A 72-amino-acid polypeptide reads, in one-letter code: Conotoxin VnMKLT2-021 (72 aa).

The signal sequence occupies residues 1–22; the sequence is MKLTCVLIVAVLFLTACQLTTA. A propeptide spanning residues 23 to 45 is cleaved from the precursor; that stretch reads ASYARSERQHPDLGSSDQNSKLT. 3 disulfide bridges follow: Cys-48–Cys-62, Cys-55–Cys-66, and Cys-61–Cys-71.

This sequence belongs to the conotoxin O1 superfamily. As to expression, expressed by the venom duct.

It localises to the secreted. This is Conotoxin VnMKLT2-021 from Conus ventricosus (Mediterranean cone).